The primary structure comprises 485 residues: GlcNAc-binding protein A (485 aa).

Residues 1-23 form the signal peptide; sequence MKKQPKMTAIALILSGISGLAYG. In terms of domain architecture, Chitin-binding type-4 spans 24–201; that stretch reads HGYVSAVENG…SFYNVIDVKF (178 aa). Positions 437–478 constitute a Chitin-binding type-3 domain; sequence AGTKVLASDGAIYQCKPWPYSGYCQQWTSNATQYQPGTGSHW.

This sequence belongs to the GbpA family.

It localises to the secreted. Its function is as follows. Probably interacts with GlcNAc residues. May promote attachment to both epithelial cell surfaces and chitin. This chain is GlcNAc-binding protein A, found in Vibrio cholerae serotype O1 (strain M66-2).